Here is a 368-residue protein sequence, read N- to C-terminus: Putative flavoprotein monooxygenase (368 aa).

FAD-binding positions include Ala-14, Glu-34, Ser-41, 52-53 (IT), Val-110, Ala-307, and Ile-319.

FAD serves as cofactor.

FAD-binding protein that may have monooxygenase activity using NADPH and/or NADH as an electron donor. This is Putative flavoprotein monooxygenase from Staphylococcus aureus (strain Mu50 / ATCC 700699).